We begin with the raw amino-acid sequence, 336 residues long: Potassium channel subfamily K member 1 (336 aa).

Topologically, residues 1 to 20 (MLQSLAGSSCVRLVERHRSA) are cytoplasmic. The helical transmembrane segment at 21–41 (WCFGLLVLGYLLYLVFGAVVF) threads the bilayer. Residues 42–103 (SSVELPYEDL…SNASGNWNWD (62 aa)) are Extracellular-facing. Asparagine 95 carries N-linked (GlcNAc...) asparagine glycosylation. The segment at residues 104-116 (FTSALFFASTVLS) is an intramembrane region (helical). The stretch at 117-122 (TTGYGH) is an intramembrane region. Residues 117–122 (TTGYGH) form a selectivity filter 1 region. At 123–132 (TVPLSDGGKA) the chain is on the extracellular side. A helical transmembrane segment spans residues 133 to 156 (FCIIYSVIGIPFTLLFLTAVVQRI). The Cytoplasmic portion of the chain corresponds to 157-181 (TVHVTRRPVLYFHIRWGFSKQMVGI). Residues 182–202 (VHAVVLGFVTVSCFFFIPAAV) form a helical membrane-spanning segment. The Extracellular segment spans residues 203–211 (FSVLEDDWN). Positions 212-224 (FLESFYFCFISLS) form an intramembrane region, helical. Residues 225 to 230 (TIGLGD) are selectivity filter 2. The stretch at 225–231 (TIGLGDY) is an intramembrane region. Residues 232–243 (VPGEGYNQKFRE) are Extracellular-facing. A helical transmembrane segment spans residues 244–267 (LYKIGITCYLLLGLIAMLVVLETF). Topologically, residues 268–336 (CELHELKKFR…SAYAEDSASH (69 aa)) are cytoplasmic. A Glycyl lysine isopeptide (Lys-Gly) (interchain with G-Cter in SUMO) cross-link involves residue lysine 274. Residues 293-299 (IVEHDQL) are important for intracellular retention in recycling endosomes.

This sequence belongs to the two pore domain potassium channel (TC 1.A.1.8) family. In terms of assembly, homodimer; disulfide-linked. Heterodimer with KCNK2; disulfide-linked. In astrocytes, forms mostly heterodimeric potassium channels with KCNK2, with only a minor proportion of functional channels containing homodimeric KCNK1. Interacts with KCNK3 and KCNK9, forming functional heterodimeric channels. Interacts with GNG4. Identified in a complex with PSD and ARF6; interacts only with PSD that is bound to ARF6. Interacts with UBE2I. Sumoylation is controversial. Sumoylated by UBE2I. Not sumoylated when expressed in xenopus oocytes or mammalian cells. Sumoylation inactivates the channel, but does not interfere with expression at the cell membrane. Sumoylation of a single subunit is sufficient to silence the dimeric channel. Sumoylation of KCNK1 is sufficient to silence heterodimeric channels formed by KCNK1 and KCNK3 or KCNK9. Desumoylated by SENP1; this activates the channel. Desumoylated by SENP1; this strongly increases halothane-mediated activation of heterodimeric channels formed with KCNK9. SENP1 treatment has no effect.

It localises to the cell membrane. Its subcellular location is the recycling endosome. The protein localises to the synaptic cell membrane. The protein resides in the cytoplasmic vesicle. It is found in the perikaryon. It localises to the cell projection. Its subcellular location is the dendrite. The protein localises to the apical cell membrane. It catalyses the reaction K(+)(in) = K(+)(out). The enzyme catalyses NH4(+)(in) = NH4(+)(out). The catalysed reaction is Na(+)(in) = Na(+)(out). It carries out the reaction Rb(+)(in) = Rb(+)(out). It catalyses the reaction Cs(+)(in) = Cs(+)(out). The enzyme catalyses Li(+)(in) = Li(+)(out). The catalysed reaction is L-glutamate(out) = L-glutamate(in). It carries out the reaction chloride(in) = chloride(out). Ion channel that contributes to passive transmembrane potassium transport and to the regulation of the resting membrane potential in brain astrocytes, but also in kidney and in other tissues. Forms dimeric channels through which potassium ions pass in accordance with their electrochemical gradient. The channel is selective for K(+) ions at physiological potassium concentrations and at neutral pH, but becomes permeable to Na(+) at subphysiological K(+) levels and upon acidification of the extracellular medium. The homodimer has very low potassium channel activity, when expressed in heterologous systems, and can function as weakly inward rectifying potassium channel. Channel activity is modulated by activation of serotonin receptors. Heterodimeric channels containing KCNK1 and KCNK2 have much higher activity, and may represent the predominant form in astrocytes. Heterodimeric channels containing KCNK1 and KCNK3 or KCNK9 have much higher activity. Heterodimeric channels formed by KCNK1 and KCNK9 may contribute to halothane-sensitive currents. Mediates outward rectifying potassium currents in dentate gyrus granule cells and contributes to the regulation of their resting membrane potential. Contributes to the regulation of action potential firing in dentate gyrus granule cells and down-regulates their intrinsic excitability. In astrocytes, the heterodimer formed by KCNK1 and KCNK2 is required for rapid glutamate release in response to activation of G-protein coupled receptors, such as F2R and CNR1. Required for normal ion and water transport in the kidney. Contributes to the regulation of the resting membrane potential of pancreatic beta cells. The low channel activity of homodimeric KCNK1 may be due to sumoylation. The low channel activity may be due to rapid internalization from the cell membrane and retention in recycling endosomes. Permeable to monovalent cations with ion selectivity for K(+) &gt; Rb(+) &gt;&gt; NH4(+) &gt;&gt; Cs(+) = Na(+) = Li(+). The protein is Potassium channel subfamily K member 1 of Cavia porcellus (Guinea pig).